The sequence spans 515 residues: Tyrosine decarboxylase 1 (515 aa).

2 consecutive repeat copies span residues 81–138 (DDIT…TELE) and 141–192 (VTDW…GKDQ). Residues 81–192 (DDITNHIVPG…KVLNKIGKDQ (112 aa)) are 2 X approximate tandem repeats. A substrate-binding site is contributed by A105. Pyridoxal 5'-phosphate is bound by residues T169 and C170. H205 lines the substrate pocket. Pyridoxal 5'-phosphate is bound by residues T264 and N318. Residue K321 is modified to N6-(pyridoxal phosphate)lysine.

Belongs to the group II decarboxylase family. Pyridoxal 5'-phosphate is required as a cofactor. In terms of tissue distribution, mostly expressed in bulbs, and, to a lower extent, in stems, roots, leaves and flowers.

The catalysed reaction is L-tyrosine + H(+) = tyramine + CO2. The protein operates within alkaloid biosynthesis. Its function is as follows. Catalyzes the decarboxylation of L-tyrosine to tyramine, which is converted to norbelladine, a precursor to all Amaryllidaceae alkaloids such as galanthamine, lycorine and haemanthamine, and including haemanthamine- and crinamine-type alkaloids, promising anticancer agents. In Narcissus pseudonarcissus (Daffodil), this protein is Tyrosine decarboxylase 1.